Reading from the N-terminus, the 153-residue chain is Endoribonuclease YbeY (153 aa).

Zn(2+) contacts are provided by histidine 114, histidine 118, and histidine 124.

This sequence belongs to the endoribonuclease YbeY family. It depends on Zn(2+) as a cofactor.

Its subcellular location is the cytoplasm. In terms of biological role, single strand-specific metallo-endoribonuclease involved in late-stage 70S ribosome quality control and in maturation of the 3' terminus of the 16S rRNA. The protein is Endoribonuclease YbeY of Nitrosococcus oceani (strain ATCC 19707 / BCRC 17464 / JCM 30415 / NCIMB 11848 / C-107).